The following is a 192-amino-acid chain: Imidazoleglycerol-phosphate dehydratase (192 aa).

This sequence belongs to the imidazoleglycerol-phosphate dehydratase family.

The protein resides in the cytoplasm. The enzyme catalyses D-erythro-1-(imidazol-4-yl)glycerol 3-phosphate = 3-(imidazol-4-yl)-2-oxopropyl phosphate + H2O. It functions in the pathway amino-acid biosynthesis; L-histidine biosynthesis; L-histidine from 5-phospho-alpha-D-ribose 1-diphosphate: step 6/9. The sequence is that of Imidazoleglycerol-phosphate dehydratase from Staphylococcus epidermidis (strain ATCC 12228 / FDA PCI 1200).